The sequence spans 247 residues: Protein At-4/1 (247 aa).

2 coiled-coil regions span residues 39–126 (VESS…YKIR) and 182–247 (LLME…LSSS).

As to quaternary structure, interacts with viral tomato spotted wilt virus (TSWV) movement protein NSM, which is involved in cell-to cell spread of viral genome and enlargement of the host plasmodesmata size exclusion limit (SEL). As to expression, expressed in leaves (at protein level).

The protein localises to the endoplasmic reticulum. It is found in the cell junction. Its subcellular location is the plasmodesma. Its function is as follows. Involved in intra- and inter-cellular trafficking through plasmodesmata (PD). This is Protein At-4/1 from Arabidopsis thaliana (Mouse-ear cress).